Reading from the N-terminus, the 291-residue chain is ATP synthase gamma chain (291 aa).

Belongs to the ATPase gamma chain family. F-type ATPases have 2 components, CF(1) - the catalytic core - and CF(0) - the membrane proton channel. CF(1) has five subunits: alpha(3), beta(3), gamma(1), delta(1), epsilon(1). CF(0) has three main subunits: a, b and c.

It localises to the cell inner membrane. In terms of biological role, produces ATP from ADP in the presence of a proton gradient across the membrane. The gamma chain is believed to be important in regulating ATPase activity and the flow of protons through the CF(0) complex. The polypeptide is ATP synthase gamma chain (Sphingopyxis alaskensis (strain DSM 13593 / LMG 18877 / RB2256) (Sphingomonas alaskensis)).